A 616-amino-acid polypeptide reads, in one-letter code: Dihydroxy-acid dehydratase (616 aa).

Asp81 contacts Mg(2+). Cys122 lines the [2Fe-2S] cluster pocket. Asp123 and Lys124 together coordinate Mg(2+). Lys124 bears the N6-carboxylysine mark. [2Fe-2S] cluster is bound at residue Cys195. Residue Glu491 participates in Mg(2+) binding. Residue Ser517 is the Proton acceptor of the active site.

This sequence belongs to the IlvD/Edd family. As to quaternary structure, homodimer. Requires [2Fe-2S] cluster as cofactor. It depends on Mg(2+) as a cofactor.

It catalyses the reaction (2R)-2,3-dihydroxy-3-methylbutanoate = 3-methyl-2-oxobutanoate + H2O. The catalysed reaction is (2R,3R)-2,3-dihydroxy-3-methylpentanoate = (S)-3-methyl-2-oxopentanoate + H2O. It participates in amino-acid biosynthesis; L-isoleucine biosynthesis; L-isoleucine from 2-oxobutanoate: step 3/4. The protein operates within amino-acid biosynthesis; L-valine biosynthesis; L-valine from pyruvate: step 3/4. In terms of biological role, functions in the biosynthesis of branched-chain amino acids. Catalyzes the dehydration of (2R,3R)-2,3-dihydroxy-3-methylpentanoate (2,3-dihydroxy-3-methylvalerate) into 2-oxo-3-methylpentanoate (2-oxo-3-methylvalerate) and of (2R)-2,3-dihydroxy-3-methylbutanoate (2,3-dihydroxyisovalerate) into 2-oxo-3-methylbutanoate (2-oxoisovalerate), the penultimate precursor to L-isoleucine and L-valine, respectively. The protein is Dihydroxy-acid dehydratase of Shigella sonnei (strain Ss046).